The sequence spans 163 residues: Ribosome maturation factor RimP (163 aa).

Belongs to the RimP family.

The protein resides in the cytoplasm. Required for maturation of 30S ribosomal subunits. In Streptococcus thermophilus (strain CNRZ 1066), this protein is Ribosome maturation factor RimP.